We begin with the raw amino-acid sequence, 155 residues long: UPF0303 protein lp_3613 (155 aa).

It belongs to the UPF0303 family.

This Lactiplantibacillus plantarum (strain ATCC BAA-793 / NCIMB 8826 / WCFS1) (Lactobacillus plantarum) protein is UPF0303 protein lp_3613.